Here is a 197-residue protein sequence, read N- to C-terminus: Ribonuclease HII (197 aa).

One can recognise an RNase H type-2 domain in the interval Glu-9–Phe-197. The a divalent metal cation site is built by Asp-15, Glu-16, and Asp-107.

Belongs to the RNase HII family. Requires Mn(2+) as cofactor. The cofactor is Mg(2+).

It is found in the cytoplasm. It catalyses the reaction Endonucleolytic cleavage to 5'-phosphomonoester.. Functionally, endonuclease that specifically degrades the RNA of RNA-DNA hybrids. This Haemophilus influenzae (strain 86-028NP) protein is Ribonuclease HII.